The primary structure comprises 299 residues: UPF0603 protein OsI_019212, chloroplastic (299 aa).

Composition is skewed to low complexity over residues 1-14 (METL…LSPL) and 22-36 (ASPA…SSPA). The N-terminal 41 residues, 1–41 (METLLSPSTLLSPLRGSKKKPASPAASASSSSSSPARSVVS), are a transit peptide targeting the chloroplast. Disordered regions lie at residues 1-60 (METL…WRGD) and 244-265 (PDPG…TKEE). The N-terminal 57 residues, 42-98 (CALRRQQPPPQAVAAWRGDGGRGGGVGSWATFLQHGLAAAALSLAISMAPAPAPAVA), are a transit peptide targeting the thylakoid. Residues 252–265 (KDNKRESNFKTKEE) are compositionally biased toward basic and acidic residues. A helical membrane pass occupies residues 276–296 (VVGGLLVIAFVVPMAQYYAYI).

Belongs to the UPF0603 family.

The protein resides in the plastid. It is found in the chloroplast thylakoid membrane. The chain is UPF0603 protein OsI_019212, chloroplastic from Oryza sativa subsp. indica (Rice).